The chain runs to 631 residues: RNA polymerase sigma factor RpoD (631 aa).

Residues 395–465 (LIKANLRLVV…TRSISDQART (71 aa)) are sigma-70 factor domain-2. An Interaction with polymerase core subunit RpoC motif is present at residues 419-422 (DLVQ). Residues 474–550 (EQINRLNRET…DKAIKNPANH (77 aa)) are sigma-70 factor domain-3. The interval 563-616 (ILGTLPEREQEVVKMRFGLEDGYSLTLEEVGLHFNVTRERIRQIESKALRRLKN) is sigma-70 factor domain-4. A DNA-binding region (H-T-H motif) is located at residues 589-608 (LEEVGLHFNVTRERIRQIES).

The protein belongs to the sigma-70 factor family. RpoD/SigA subfamily. In terms of assembly, interacts transiently with the RNA polymerase catalytic core.

Its subcellular location is the cytoplasm. Its function is as follows. Sigma factors are initiation factors that promote the attachment of RNA polymerase to specific initiation sites and are then released. This sigma factor is the primary sigma factor during exponential growth. This is RNA polymerase sigma factor RpoD from Borreliella burgdorferi (strain ATCC 35210 / DSM 4680 / CIP 102532 / B31) (Borrelia burgdorferi).